A 480-amino-acid chain; its full sequence is Lysostaphin (480 aa).

The N-terminal stretch at 1-23 (MKKTKNNYYTTPLAIGLSTFALA) is a signal peptide. Positions 24–234 (SIVYGGIQNE…ALVQNRTALR (211 aa)) are excised as a propeptide. Tandem repeats lie at residues 49-61 (AEVETSKPPVENT), 62-74 (AEVETSKAPVENT), 75-87 (AEVETSKAPVENT), 88-100 (AEVETSKAPVENT), 101-113 (AEVETSKAPVENT), 114-126 (AEVETSKAPVENT), 127-139 (AEVETSKAPVENT), 140-152 (AEVETSKAPVENT), 153-165 (AEVETSKAPVENT), 166-178 (AEVETSKAPVENT), 179-191 (AEVETSKAPVENT), 192-204 (AEVETSKAPVENT), and 205-217 (AEVETSKAPVENT). The 14 X 13 AA tandem repeats of A-E-V-E-T-S-K-[AP]-P-V-E-N-T stretch occupies residues 49-230 (AEVETSKPPV…ETSKALVQNR (182 aa)). Positions 51–219 (VETSKPPVEN…SKAPVENTAE (169 aa)) are disordered. One copy of the 14; approximate repeat lies at 218–230 (AEVETSKALVQNR). Residues His266 and Asp270 each coordinate Zn(2+). Residue His347 is part of the active site. Zn(2+) is bound at residue His349. The region spanning 400–468 (SESASFTPNT…YLPVRTWNKS (69 aa)) is the SH3b domain.

The protein belongs to the peptidase M23B family. In terms of assembly, monomer. The cofactor is Zn(2+).

It localises to the secreted. The catalysed reaction is Hydrolysis of the -Gly-|-Gly- bond in the pentaglycine inter-peptide link joining staphylococcal cell wall peptidoglycans.. Functionally, lyses staphylococcal cells by hydrolyzing the polyglycine interpeptide bridges of the peptidoglycan. The protein is Lysostaphin (lss) of Staphylococcus staphylolyticus.